A 237-amino-acid polypeptide reads, in one-letter code: Ribosomal RNA small subunit methyltransferase G (237 aa).

S-adenosyl-L-methionine contacts are provided by residues Gly78, Phe83, 129–130 (AE), and Arg148.

Belongs to the methyltransferase superfamily. RNA methyltransferase RsmG family.

Its subcellular location is the cytoplasm. Specifically methylates the N7 position of a guanine in 16S rRNA. This chain is Ribosomal RNA small subunit methyltransferase G, found in Streptococcus pyogenes serotype M2 (strain MGAS10270).